The following is a 492-amino-acid chain: Fascin-2 (492 aa).

The protein belongs to the fascin family. Exclusively expressed in the eye, specifically in photoreceptor cells.

The protein resides in the cytoplasm. Its subcellular location is the cytoskeleton. The protein localises to the cell projection. It is found in the stereocilium. Acts as an actin bundling protein. May play a pivotal role in photoreceptor cell-specific events, such as disk morphogenesis. The protein is Fascin-2 (FSCN2) of Bos taurus (Bovine).